The sequence spans 175 residues: Cell number regulator 9 (175 aa).

Transmembrane regions (helical) follow at residues 53–73 and 80–100; these read GLCC…AEIV and CGVA…HWIY.

It belongs to the cornifelin family. Expressed in roots, coleoptiles, leaves and stalks.

It localises to the membrane. The sequence is that of Cell number regulator 9 (CNR9) from Zea mays (Maize).